The sequence spans 115 residues: Basic leucine zipper transcriptional factor ATF-like (115 aa).

Residues Met1–Ile57 form a disordered region. Residues Asp27–His90 enclose the bZIP domain. The basic motif stretch occupies residues Lys29–Lys51. Residues Leu55–Leu83 are leucine-zipper.

The protein belongs to the bZIP family.

Its subcellular location is the nucleus. It is found in the cytoplasm. Its function is as follows. AP-1 family transcription factor that controls the differentiation of lineage-specific cells in the immune system: specifically mediates the differentiation of T-helper 17 cells (Th17), follicular T-helper cells (TfH), CD8(+) dendritic cells and class-switch recombination (CSR) in B-cells. The polypeptide is Basic leucine zipper transcriptional factor ATF-like (batf) (Xenopus tropicalis (Western clawed frog)).